The primary structure comprises 504 residues: D-alanine--D-alanyl carrier protein ligase (504 aa).

ATP is bound at residue T152 to S153. D197 contributes to the D-alanine binding site. N292–T297 lines the ATP pocket. V301 contacts D-alanine. ATP is bound by residues D383, Y394–R397, and K492. A D-alanine-binding site is contributed by K492.

This sequence belongs to the ATP-dependent AMP-binding enzyme family. DltA subfamily.

The protein resides in the cytoplasm. It catalyses the reaction holo-[D-alanyl-carrier protein] + D-alanine + ATP = D-alanyl-[D-alanyl-carrier protein] + AMP + diphosphate. It functions in the pathway cell wall biogenesis; lipoteichoic acid biosynthesis. In terms of biological role, catalyzes the first step in the D-alanylation of lipoteichoic acid (LTA), the activation of D-alanine and its transfer onto the D-alanyl carrier protein (Dcp) DltC. In an ATP-dependent two-step reaction, forms a high energy D-alanyl-AMP intermediate, followed by transfer of the D-alanyl residue as a thiol ester to the phosphopantheinyl prosthetic group of the Dcp. D-alanylation of LTA plays an important role in modulating the properties of the cell wall in Gram-positive bacteria, influencing the net charge of the cell wall. The sequence is that of D-alanine--D-alanyl carrier protein ligase from Bacillus cereus (strain ATCC 10987 / NRS 248).